The chain runs to 197 residues: Glycerol-3-phosphate acyltransferase (197 aa).

5 consecutive transmembrane segments (helical) span residues 2–22 (LDVI…AIVV), 53–73 (AGIT…LAWL), 78–98 (PVVA…PVYF), 112–132 (VILA…LAVA), and 152–174 (YMLW…AAIV).

The protein belongs to the PlsY family. As to quaternary structure, probably interacts with PlsX.

It is found in the cell inner membrane. The catalysed reaction is an acyl phosphate + sn-glycerol 3-phosphate = a 1-acyl-sn-glycero-3-phosphate + phosphate. It functions in the pathway lipid metabolism; phospholipid metabolism. Its function is as follows. Catalyzes the transfer of an acyl group from acyl-phosphate (acyl-PO(4)) to glycerol-3-phosphate (G3P) to form lysophosphatidic acid (LPA). This enzyme utilizes acyl-phosphate as fatty acyl donor, but not acyl-CoA or acyl-ACP. This is Glycerol-3-phosphate acyltransferase from Halorhodospira halophila (strain DSM 244 / SL1) (Ectothiorhodospira halophila (strain DSM 244 / SL1)).